A 403-amino-acid chain; its full sequence is Endophilin-B2 (403 aa).

The tract at residues 1–27 is membrane-binding amphipathic helix; it reads MDFNVKKLASDAGVFFSRAMQFTEEKL. Positions 24-287 constitute a BAR domain; the sequence is EEKLGQAEKT…LGRFSGTFVG (264 aa). Residues 210–233 adopt a coiled-coil conformation; the sequence is WSDEVEKAEHELRLTQTEFDRQAE. The region spanning 343–403 is the SH3 domain; sequence SGTRKARVLY…VPVTYLELLS (61 aa).

This sequence belongs to the endophilin family. In terms of assembly, homodimer, and heterodimer with SH3GLB1.

Its subcellular location is the cytoplasm. This chain is Endophilin-B2, found in Gallus gallus (Chicken).